We begin with the raw amino-acid sequence, 373 residues long: Inhibitor of nuclear factor kappa-B kinase-interacting protein (373 aa).

The span at 1-11 shows a compositional bias: basic residues; it reads MSEVKSRKKPG. Residues 1–38 are disordered; sequence MSEVKSRKKPGPKVAAPEPEKRSDGRKNPEARGDAGWA. The segment covering 18 to 33 has biased composition (basic and acidic residues); the sequence is EPEKRSDGRKNPEARG. The chain crosses the membrane as a helical span at residues 43 to 59; that stretch reads GLSLLSLAMTLGLAWLV. Coiled-coil stretches lie at residues 86–257 and 285–324; these read LQSK…NKLS and QDLIGTERKMEELTMQMFNMEDDMLRAVSEIMEMQKTLEG. The N-linked (GlcNAc...) asparagine glycan is linked to Asn-151.

In terms of processing, N-glycosylated at Asn-151.

It localises to the endoplasmic reticulum membrane. Target of p53/TP53 with pro-apoptotic function. The sequence is that of Inhibitor of nuclear factor kappa-B kinase-interacting protein (Ikbip) from Mus musculus (Mouse).